The primary structure comprises 198 residues: Probable GTP-binding protein EngB (198 aa).

One can recognise an EngB-type G domain in the interval 36-198 (SEPQFAFIGR…NLSKLQELLE (163 aa)). GTP contacts are provided by residues 44–51 (GRSNVGKS), 70–74 (GRTQL), 88–91 (DLPG), 155–158 (NKID), and 182–184 (ISA). 2 residues coordinate Mg(2+): S51 and T72.

This sequence belongs to the TRAFAC class TrmE-Era-EngA-EngB-Septin-like GTPase superfamily. EngB GTPase family. The cofactor is Mg(2+).

Its function is as follows. Necessary for normal cell division and for the maintenance of normal septation. The polypeptide is Probable GTP-binding protein EngB (Mesomycoplasma hyopneumoniae (strain 232) (Mycoplasma hyopneumoniae)).